The primary structure comprises 125 residues: CLAVATA3/ESR (CLE)-related protein ESR3 (125 aa).

The signal sequence occupies residues 1-26 (MASRMGMVAIMSLFVYAIVVPTSVNA). Residues 45–125 (QQQGGFIGHR…IGPPPLPDRY (81 aa)) are disordered. Hydroxyproline is present on residues proline 75 and proline 78. Residue proline 78 is glycosylated (O-linked (Ara...) hydroxyproline).

The protein belongs to the CLV3/ESR signal peptide family. Post-translationally, the O-glycosylation (arabinosylation) of the hydroxyproline Pro-78 enhances binding affinity of the ESR3p peptide for its receptor. In terms of tissue distribution, seed endosperm.

The protein localises to the secreted. The protein resides in the extracellular space. Its function is as follows. Extracellular signal peptide that regulates cell fate. This Zea mays (Maize) protein is CLAVATA3/ESR (CLE)-related protein ESR3.